The following is a 250-amino-acid chain: Probable transcriptional regulatory protein Rxyl_1318 (250 aa).

It belongs to the TACO1 family.

It is found in the cytoplasm. The protein is Probable transcriptional regulatory protein Rxyl_1318 of Rubrobacter xylanophilus (strain DSM 9941 / JCM 11954 / NBRC 16129 / PRD-1).